Reading from the N-terminus, the 445-residue chain is Phosphoglucosamine mutase (445 aa).

Ser99 functions as the Phosphoserine intermediate in the catalytic mechanism. 4 residues coordinate Mg(2+): Ser99, Asp242, Asp244, and Asp246. A Phosphoserine modification is found at Ser99.

It belongs to the phosphohexose mutase family. Mg(2+) is required as a cofactor. In terms of processing, activated by phosphorylation.

The catalysed reaction is alpha-D-glucosamine 1-phosphate = D-glucosamine 6-phosphate. Catalyzes the conversion of glucosamine-6-phosphate to glucosamine-1-phosphate. In Campylobacter lari (strain RM2100 / D67 / ATCC BAA-1060), this protein is Phosphoglucosamine mutase.